A 198-amino-acid chain; its full sequence is Guanylyl cyclase-activating protein 2 (198 aa).

The N-myristoyl glycine moiety is linked to residue glycine 2. 4 EF-hand domains span residues 16–51 (DVAE…QDNH), 52–87 (EAAE…VLRG), 88–123 (KLEH…IYKL), and 139–174 (TPEE…DKWV). Residues aspartate 65, asparagine 67, aspartate 69, threonine 71, glutamate 76, aspartate 101, aspartate 103, asparagine 105, cysteine 107, glutamate 112, aspartate 152, asparagine 154, aspartate 156, glutamine 158, and glutamate 163 each contribute to the Ca(2+) site.

As to quaternary structure, undergoes dimerization at low calcium ions concentration, while the presence of calcium ions inhibits its dimerization. Dimerization correlates with its ability to activate GC. Retina and pineal gland.

In terms of biological role, stimulates synthesis of cGMP in photoreceptors. Thought to mediate Ca(2+)-sensitive regulation of retinal guanylyl cyclase (GC), a key event in recovery of the dark state of rod photoreceptors following light exposure. In Gallus gallus (Chicken), this protein is Guanylyl cyclase-activating protein 2 (GUCA1B).